Here is a 249-residue protein sequence, read N- to C-terminus: Elsinochromes biosynthesis cluster protein HP3 (249 aa).

The N-linked (GlcNAc...) asparagine glycan is linked to Asn-106. A helical membrane pass occupies residues 138 to 158 (VVFAFMLSAWLVWLITVYAFA).

Its subcellular location is the membrane. Its function is as follows. Part of the gene cluster that mediates the biosynthesis of elsinochromes, pigments consisting of at least four interconvertible tautomers (A, B, C and D) that have a core phenolic quinone to which various side chains are attached and which play an important role in fungal pathogenesis. The non-reducing polyketide synthase PKS1 was proposed to iteratively catalyze decarboxylation between acetyl-CoA and malonyl-CoA subunits for polyketide chain elongation. The released polyketide undergoes cyclization to form an aromatic ring, and proceeds via serial modification steps to produce the heptaketide back- bone of elsinochrome. As elsinochrome has a symmetrical structure, two identical heptaketides are fused to form a core 1,2-dihydrobenzo-perylene ring structure, which can then be successively modified to produce the various derivatives of elsinochrome. Some of these reactions may be cooperatively carried out, at least in part, by the products of RDT1, OXR1 and PKS1. PRF1, embedded within the elsinochrome cluster possibly functions to stabilize some of the biosynthetic enzymes required for elsinochrome production. As prefoldin is a hexamer containing 2 a and 4 b subunits, additional prefoldin subunits, whose coding genes may not immediately link to the elsinochrome biosynthetic gene cluster, are required to fulfill the chaperone function. In addition, no methyltransferase-coding gene exists within the biosynthetic gene cluster, even though elsinochrome has four methyl groups at positions C3, C7, C8 and C12. Apparently, the identified gene cluster does not contain the entire entourage of genes responsible for elsinochrome biosynthesis. Once elsinochrome is synthesized, it must be exported outside the fungal cells, which is probably accomplished by the ECT1 transporter, to avoid toxicity. The chain is Elsinochromes biosynthesis cluster protein HP3 from Elsinoe fawcettii (Citrus scab fungus).